Consider the following 370-residue polypeptide: Anhydro-N-acetylmuramic acid kinase (370 aa).

13–20 contributes to the ATP binding site; that stretch reads GTSMDGVD.

Belongs to the anhydro-N-acetylmuramic acid kinase family.

The enzyme catalyses 1,6-anhydro-N-acetyl-beta-muramate + ATP + H2O = N-acetyl-D-muramate 6-phosphate + ADP + H(+). It functions in the pathway amino-sugar metabolism; 1,6-anhydro-N-acetylmuramate degradation. The protein operates within cell wall biogenesis; peptidoglycan recycling. Its function is as follows. Catalyzes the specific phosphorylation of 1,6-anhydro-N-acetylmuramic acid (anhMurNAc) with the simultaneous cleavage of the 1,6-anhydro ring, generating MurNAc-6-P. Is required for the utilization of anhMurNAc either imported from the medium or derived from its own cell wall murein, and thus plays a role in cell wall recycling. The polypeptide is Anhydro-N-acetylmuramic acid kinase (Vibrio parahaemolyticus serotype O3:K6 (strain RIMD 2210633)).